The chain runs to 81 residues: Large ribosomal subunit protein bL27 (81 aa).

Residues 1–22 (MAHKTGQSSSSNGRESKSKRLG) are disordered.

It belongs to the bacterial ribosomal protein bL27 family.

The sequence is that of Large ribosomal subunit protein bL27 from Opitutus terrae (strain DSM 11246 / JCM 15787 / PB90-1).